Reading from the N-terminus, the 238-residue chain is Uridylate kinase (238 aa).

12–15 (KLSG) lines the ATP pocket. Position 54 (Gly54) interacts with UMP. 2 residues coordinate ATP: Gly55 and Arg59. UMP contacts are provided by residues Asp74 and 135 to 142 (TGNPFFTT). Residues Thr162, Tyr168, and Asp171 each contribute to the ATP site.

Belongs to the UMP kinase family. As to quaternary structure, homohexamer.

Its subcellular location is the cytoplasm. It carries out the reaction UMP + ATP = UDP + ADP. Its pathway is pyrimidine metabolism; CTP biosynthesis via de novo pathway; UDP from UMP (UMPK route): step 1/1. With respect to regulation, inhibited by UTP. Functionally, catalyzes the reversible phosphorylation of UMP to UDP. The sequence is that of Uridylate kinase from Herminiimonas arsenicoxydans.